The chain runs to 196 residues: Pyridoxal 5'-phosphate synthase subunit PdxT (196 aa).

47-49 (GES) is an L-glutamine binding site. Cys-79 functions as the Nucleophile in the catalytic mechanism. Residues Arg-106 and 134–135 (IR) contribute to the L-glutamine site. Catalysis depends on charge relay system residues His-170 and Glu-172.

The protein belongs to the glutaminase PdxT/SNO family. In terms of assembly, in the presence of PdxS, forms a dodecamer of heterodimers. Only shows activity in the heterodimer.

It catalyses the reaction aldehydo-D-ribose 5-phosphate + D-glyceraldehyde 3-phosphate + L-glutamine = pyridoxal 5'-phosphate + L-glutamate + phosphate + 3 H2O + H(+). It carries out the reaction L-glutamine + H2O = L-glutamate + NH4(+). Its pathway is cofactor biosynthesis; pyridoxal 5'-phosphate biosynthesis. Catalyzes the hydrolysis of glutamine to glutamate and ammonia as part of the biosynthesis of pyridoxal 5'-phosphate. The resulting ammonia molecule is channeled to the active site of PdxS. This chain is Pyridoxal 5'-phosphate synthase subunit PdxT, found in Bacillus cytotoxicus (strain DSM 22905 / CIP 110041 / 391-98 / NVH 391-98).